Reading from the N-terminus, the 411-residue chain is ATPase family AAA domain-containing protein 3C (411 aa).

177-184 serves as a coordination point for ATP; that stretch reads GPPGTGKT.

The protein belongs to the AAA ATPase family.

In Homo sapiens (Human), this protein is ATPase family AAA domain-containing protein 3C (ATAD3C).